A 178-amino-acid polypeptide reads, in one-letter code: GTP-dependent dephospho-CoA kinase (178 aa).

Positions 55, 57, 74, 76, and 127 each coordinate GTP.

Belongs to the GTP-dependent DPCK family.

The enzyme catalyses 3'-dephospho-CoA + GTP = GDP + CoA + H(+). Its pathway is cofactor biosynthesis; coenzyme A biosynthesis. Its function is as follows. Catalyzes the GTP-dependent phosphorylation of the 3'-hydroxyl group of dephosphocoenzyme A to form coenzyme A (CoA). In Saccharolobus islandicus (strain Y.G.57.14 / Yellowstone #1) (Sulfolobus islandicus), this protein is GTP-dependent dephospho-CoA kinase.